Here is a 103-residue protein sequence, read N- to C-terminus: MASSETQPRFGQSVKGLLSDKVTSCSGDVIALTRQVLKGSRSQELLSQAARNMVIQEDAILHSEDSLRKMSIITTHLQYQQEAIQKNVEHSKNLQDQLRHLMK.

The protein belongs to the BORCS7 family.

It localises to the lysosome membrane. In terms of biological role, as part of a BORC-like complex may play a role in lysosomes movement and localization at the cell periphery. Associated with the cytosolic face of lysosomes, this complex may couple lysosomes to microtubule plus-end-directed kinesin motor. This chain is BLOC-1-related complex subunit 7, found in Danio rerio (Zebrafish).